A 168-amino-acid polypeptide reads, in one-letter code: Pheromone-binding protein (168 aa).

Residues 1–26 (MNKTTTKMKVAVVAIVVYLAVGNVDS) form the signal peptide. Cystine bridges form between Cys-45/Cys-80, Cys-76/Cys-134, and Cys-123/Cys-143.

This sequence belongs to the PBP/GOBP family. Homodimer. In terms of tissue distribution, antenna.

In terms of biological role, this major soluble protein in olfactory sensilla of male moths might serve to solubilize the extremely hydrophobic pheromone molecules and to transport pheromone through the aqueous lymph to receptors located on olfactory cilia. PBP is also found in sensilla from female M.sexta antennae. This Manduca sexta (Tobacco hawkmoth) protein is Pheromone-binding protein.